Consider the following 491-residue polypeptide: Glucose-6-phosphate 1-dehydrogenase (491 aa).

NADP(+)-binding positions include arginine 50, 92 to 93 (DV), and lysine 147. 4 residues coordinate substrate: histidine 177, lysine 181, glutamate 215, and aspartate 234. Catalysis depends on histidine 239, which acts as the Proton acceptor. Residues lysine 339 and lysine 344 each contribute to the substrate site.

This sequence belongs to the glucose-6-phosphate dehydrogenase family.

It carries out the reaction D-glucose 6-phosphate + NADP(+) = 6-phospho-D-glucono-1,5-lactone + NADPH + H(+). It participates in carbohydrate degradation; pentose phosphate pathway; D-ribulose 5-phosphate from D-glucose 6-phosphate (oxidative stage): step 1/3. Functionally, catalyzes the oxidation of glucose 6-phosphate to 6-phosphogluconolactone. In Dickeya dadantii (strain 3937) (Erwinia chrysanthemi (strain 3937)), this protein is Glucose-6-phosphate 1-dehydrogenase.